We begin with the raw amino-acid sequence, 424 residues long: Inhibin beta A chain (424 aa).

Residues methionine 1–serine 20 form the signal peptide. Residues serine 21–arginine 308 constitute a propeptide that is removed on maturation. A glycan (N-linked (GlcNAc...) asparagine) is linked at asparagine 165. 2 disordered regions span residues glutamine 178 to phenylalanine 197 and lysine 259 to arginine 306. Over residues alanine 188–phenylalanine 197 the composition is skewed to acidic residues. Over residues lysine 263 to glutamate 275 the composition is skewed to basic and acidic residues. 4 disulfide bridges follow: cysteine 312-cysteine 320, cysteine 319-cysteine 389, cysteine 348-cysteine 421, and cysteine 352-cysteine 423.

Belongs to the TGF-beta family. In terms of assembly, dimeric, linked by one or more disulfide bonds. Inhibin A is a dimer of alpha/INHA and beta-A/INHBA. Activin A is a homodimer of beta-A/INHBA. Activin AB is a dimer of beta-A/INHBA and beta-B/INHBB. Interacts with FST and FSTL3; these interactions prevent activin A interaction to its type II receptor. Activin A interacts with ACVR2A. Activin A interacts with BMPR2. Inhibin A interacts with ACVR1; this interaction creates a non-signaling complex (NSC) that inhibits ACVR1-mediated BMP signaling. Inhibin A interacts with ACVR2A.

The protein resides in the secreted. In terms of biological role, inhibins/activins are involved in regulating a number of diverse functions such as hypothalamic and pituitary hormone secretion, gonadal hormone secretion, germ cell development and maturation, erythroid differentiation, insulin secretion, nerve cell survival, embryonic axial development or bone growth, depending on their subunit composition. Activin A is a homodimer of INHBA that plays a role in several essential biological processes including embryonic development, stem cell maintenance and differentiation, haematopoiesis, cell proliferation and tissue fibrosis. Signals through type I (such as ACVR1B or ACVR1C) and type II receptors (such as ACVR2A, ACVR2B or BMPR2) which, upon ligand binding, phosphorylate SMAD2 and SMAD3 intracellular signaling mediators that form a complex with SMAD4, translocate to the nucleus and modulate gene expression. Can also activate alternative non-canonical intracellular signaling pathways including the p38 MAPK, extracellular signal-regulated kinases 1/2 (ERK1/2) and c-Jun N-terminal kinases (JNKs) to modulate cell migration and differentiation. Alternatively, promotes osteoblastic differentiation via ACVRL1-SMAD1/5/9 pathway. In addition, can engage the type I receptor ACVR1 to form an ACVR1-activin A-type II receptor non-signaling complex (NSC) that renders receptors unavailable for engagement with BMPs, hence resulting in an apparent inhibition of ACVR1-mediated BMP signaling. Functionally, inhibin A is a dimer of alpha/INHA and beta-A/INHBA that functions as a feedback regulator in the hypothalamic-pituitary-gonadal (HPG) axis. Inhibits the secretion of FSH from the anterior pituitary gland by acting on pituitary gonadotrope cells. Antagonizes activin A by binding to the proteoglycan, betaglycan, and forming a stable complex with and, thereby, sequestering type II activin receptors while excluding type I receptor. The chain is Inhibin beta A chain (INHBA) from Sus scrofa (Pig).